Consider the following 264-residue polypeptide: Na(+)-translocating NADH-quinone reductase subunit E (264 aa).

Transmembrane regions (helical) follow at residues Val-11–Gly-31, Met-50–Ile-70, Phe-90–Leu-110, Gly-123–Ile-143, Phe-149–Leu-169, and Met-189–Ile-209.

This sequence belongs to the NqrDE/RnfAE family. In terms of assembly, composed of six subunits; NqrA, NqrB, NqrC, NqrD, NqrE and NqrF.

The protein localises to the cell inner membrane. It carries out the reaction a ubiquinone + n Na(+)(in) + NADH + H(+) = a ubiquinol + n Na(+)(out) + NAD(+). Functionally, NQR complex catalyzes the reduction of ubiquinone-1 to ubiquinol by two successive reactions, coupled with the transport of Na(+) ions from the cytoplasm to the periplasm. NqrA to NqrE are probably involved in the second step, the conversion of ubisemiquinone to ubiquinol. The chain is Na(+)-translocating NADH-quinone reductase subunit E from Chlamydia caviae (strain ATCC VR-813 / DSM 19441 / 03DC25 / GPIC) (Chlamydophila caviae).